A 244-amino-acid chain; its full sequence is Homeobox-leucine zipper protein HOX14 (244 aa).

A disordered region spans residues 25 to 64; the sequence is ASGEVQGERPRARRRRRRGARCVGGGGGGGEVDGGDPKKR. Positions 35-44 are enriched in basic residues; that stretch reads RARRRRRRGA. Over residues 46–56 the composition is skewed to gly residues; it reads CVGGGGGGGEV. The segment at residues 59-118 is a DNA-binding region (homeobox); it reads GDPKKRRLSDEQVEMLELSFREERKLETGRKVHLASELGLDPKQVAVWFQNRRARHKSKL. The stretch at 108–167 forms a coiled coil; sequence QNRRARHKSKLLEEEFSKLKHAHDAAILHKCHLENEVLRLKERLVVAEEEVRRLRSAAGS.

This sequence belongs to the HD-ZIP homeobox family. Class I subfamily. In terms of tissue distribution, expressed in roots, stems, leaf blades and panicles.

Its subcellular location is the nucleus. In terms of biological role, probable transcription factor. In Oryza sativa subsp. indica (Rice), this protein is Homeobox-leucine zipper protein HOX14 (HOX14).